Consider the following 417-residue polypeptide: Gamma-glutamyl phosphate reductase (417 aa).

Belongs to the gamma-glutamyl phosphate reductase family.

It localises to the cytoplasm. It catalyses the reaction L-glutamate 5-semialdehyde + phosphate + NADP(+) = L-glutamyl 5-phosphate + NADPH + H(+). It functions in the pathway amino-acid biosynthesis; L-proline biosynthesis; L-glutamate 5-semialdehyde from L-glutamate: step 2/2. Functionally, catalyzes the NADPH-dependent reduction of L-glutamate 5-phosphate into L-glutamate 5-semialdehyde and phosphate. The product spontaneously undergoes cyclization to form 1-pyrroline-5-carboxylate. The protein is Gamma-glutamyl phosphate reductase of Idiomarina loihiensis (strain ATCC BAA-735 / DSM 15497 / L2-TR).